A 330-amino-acid polypeptide reads, in one-letter code: Aspartate--ammonia ligase (330 aa).

Belongs to the class-II aminoacyl-tRNA synthetase family. AsnA subfamily.

The protein resides in the cytoplasm. It catalyses the reaction L-aspartate + NH4(+) + ATP = L-asparagine + AMP + diphosphate + H(+). It functions in the pathway amino-acid biosynthesis; L-asparagine biosynthesis; L-asparagine from L-aspartate (ammonia route): step 1/1. In Shigella dysenteriae serotype 1 (strain Sd197), this protein is Aspartate--ammonia ligase.